The sequence spans 752 residues: Phosphoribosylformylglycinamidine synthase subunit PurL (752 aa).

His58 is an active-site residue. 2 residues coordinate ATP: Tyr61 and Lys103. Glu105 lines the Mg(2+) pocket. Substrate-binding positions include 106–109 (SHNH) and Arg128. His107 acts as the Proton acceptor in catalysis. Residue Asp129 participates in Mg(2+) binding. Gln253 lines the substrate pocket. Asp281 serves as a coordination point for Mg(2+). 325 to 327 (ESQ) contributes to the substrate binding site. The ATP site is built by Asp513 and Gly550. Residue Asn551 participates in Mg(2+) binding. Ser553 lines the substrate pocket.

The protein belongs to the FGAMS family. As to quaternary structure, monomer. Part of the FGAM synthase complex composed of 1 PurL, 1 PurQ and 2 PurS subunits.

The protein resides in the cytoplasm. The catalysed reaction is N(2)-formyl-N(1)-(5-phospho-beta-D-ribosyl)glycinamide + L-glutamine + ATP + H2O = 2-formamido-N(1)-(5-O-phospho-beta-D-ribosyl)acetamidine + L-glutamate + ADP + phosphate + H(+). It functions in the pathway purine metabolism; IMP biosynthesis via de novo pathway; 5-amino-1-(5-phospho-D-ribosyl)imidazole from N(2)-formyl-N(1)-(5-phospho-D-ribosyl)glycinamide: step 1/2. Part of the phosphoribosylformylglycinamidine synthase complex involved in the purines biosynthetic pathway. Catalyzes the ATP-dependent conversion of formylglycinamide ribonucleotide (FGAR) and glutamine to yield formylglycinamidine ribonucleotide (FGAM) and glutamate. The FGAM synthase complex is composed of three subunits. PurQ produces an ammonia molecule by converting glutamine to glutamate. PurL transfers the ammonia molecule to FGAR to form FGAM in an ATP-dependent manner. PurS interacts with PurQ and PurL and is thought to assist in the transfer of the ammonia molecule from PurQ to PurL. This chain is Phosphoribosylformylglycinamidine synthase subunit PurL, found in Streptomyces avermitilis (strain ATCC 31267 / DSM 46492 / JCM 5070 / NBRC 14893 / NCIMB 12804 / NRRL 8165 / MA-4680).